A 440-amino-acid chain; its full sequence is Trigger factor (440 aa).

Residues G163–P248 form the PPIase FKBP-type domain.

Belongs to the FKBP-type PPIase family. Tig subfamily.

The protein resides in the cytoplasm. It catalyses the reaction [protein]-peptidylproline (omega=180) = [protein]-peptidylproline (omega=0). Involved in protein export. Acts as a chaperone by maintaining the newly synthesized protein in an open conformation. Functions as a peptidyl-prolyl cis-trans isomerase. This chain is Trigger factor, found in Solidesulfovibrio magneticus (strain ATCC 700980 / DSM 13731 / RS-1) (Desulfovibrio magneticus).